The following is a 113-amino-acid chain: Protein Wnt-10 (113 aa).

Residue Ser1 is the site of O-palmitoleoyl serine; by PORCN attachment. A disulfide bridge connects residues Cys79 and Cys94.

Belongs to the Wnt family. In terms of processing, palmitoleoylation is required for efficient binding to frizzled receptors. Depalmitoleoylation leads to Wnt signaling pathway inhibition.

The protein localises to the secreted. Its subcellular location is the extracellular space. It is found in the extracellular matrix. Ligand for members of the frizzled family of seven transmembrane receptors. Probable developmental protein. May be a signaling molecule which affects the development of discrete regions of tissues. Is likely to signal over only few cell diameters. The polypeptide is Protein Wnt-10 (WNT-10) (Eptatretus stoutii (Pacific hagfish)).